The following is an 836-amino-acid chain: Neuroligin-2 (836 aa).

An N-terminal signal peptide occupies residues 1–14 (MWLLALCLVGLAGA). The Extracellular portion of the chain corresponds to 15-678 (QRGGGGPGGG…DSRDYSTELS (664 aa)). 2 N-linked (GlcNAc...) asparagine glycosylation sites follow: N98 and N136. 3 disulfide bridges follow: C106/C141, C317/C328, and C487/C521. N-linked (GlcNAc...) asparagine glycosylation is present at N522. The interval 623–661 (PPYATRWPPRTPGPGTSGTRRPPPPATLPPESDIDLGPR) is disordered. A helical transmembrane segment spans residues 679–699 (VTVAVGASLLFLNILAFAALY). A required for interaction with LHFPL4 region spans residues 679-699 (VTVAVGASLLFLNILAFAALY). The Cytoplasmic segment spans residues 700–836 (YKRDRRQELR…LPHPHSTTRV (137 aa)). Disordered stretches follow at residues 711–735 (RRLSPPGGSGSGVPGGGPLLPTAGR) and 791–836 (LLPS…TTRV). 2 positions are modified to phosphoserine: S714 and S719. The span at 717–728 (GGSGSGVPGGGP) shows a compositional bias: gly residues. Over residues 796 to 819 (LGPPPPPPPPSLHPFGPFPPPPPT) the composition is skewed to pro residues. Over residues 824-836 (NNTLPHPHSTTRV) the composition is skewed to polar residues.

It belongs to the type-B carboxylesterase/lipase family. Interacts with neurexins NRXN1, NRXN2 and NRXN3. Interaction with neurexins is mediated by heparan sulfate glycan modification on neurexin. Interacts (via its C-terminus) with DLG4/PSD-95 (via PDZ domain 3). Interacts with PATJ. Interacts with MDGA2. Interacts with GPHN. Interacts with MDGA1. Found in a complex with MAGI2 and IGSF9B, where it interacts with MAGI2 (via WW 1, WW 2 and PDZ 2 domains). Identified in a complex of 720 kDa composed of LHFPL4, NLGN2, GABRA1, GABRB2, GABRG2 and GABRB3. Interacts with LHFPL4; leading to mutual regulation of the protein level and synaptic clustering. Interacts with GABRA1. As to expression, brain and arteries. Detected in the retina outer plexiform layer (at protein level). Widely expressed. Detected in heart, brain, spleen, lung, liver, skeletal muscle, kidney and testis.

The protein localises to the cell membrane. It is found in the postsynaptic cell membrane. It localises to the presynaptic cell membrane. Its function is as follows. Transmembrane scaffolding protein involved in cell-cell interactions via its interactions with neurexin family members. Mediates cell-cell interactions both in neurons and in other types of cells, such as Langerhans beta cells. Mediates cell-cell interactions between Langerhans beta cells and modulates insulin secretion. Plays a role in synapse function and synaptic signal transmission, especially via gamma-aminobutyric acid receptors (GABA(A) receptors). Functions by recruiting and clustering synaptic proteins. Promotes clustering of postsynaptic GABRG2 and GPHN. Promotes clustering of postsynaptic LHFPL4. Modulates signaling by inhibitory synapses, and thereby plays a role in controlling the ratio of signaling by excitatory and inhibitory synapses and information processing. Required for normal signal amplitude from inhibitory synapses, but is not essential for normal signal frequency. May promote the initial formation of synapses, but is not essential for this. In vitro, triggers the de novo formation of presynaptic structures. This is Neuroligin-2 (Nlgn2) from Mus musculus (Mouse).